Consider the following 484-residue polypeptide: Malonate-semialdehyde dehydrogenase 2 (484 aa).

Positions 153, 177, 180, 181, 230, and 252 each coordinate NAD(+). Cys-285 (nucleophile) is an active-site residue. NAD(+) is bound at residue Glu-385.

The protein belongs to the aldehyde dehydrogenase family. IolA subfamily. In terms of assembly, homotetramer.

It catalyses the reaction 3-oxopropanoate + NAD(+) + CoA + H2O = hydrogencarbonate + acetyl-CoA + NADH + H(+). The catalysed reaction is 2-methyl-3-oxopropanoate + NAD(+) + CoA + H2O = propanoyl-CoA + hydrogencarbonate + NADH + H(+). It participates in polyol metabolism; myo-inositol degradation into acetyl-CoA; acetyl-CoA from myo-inositol: step 7/7. Functionally, catalyzes the oxidation of malonate semialdehyde (MSA) and methylmalonate semialdehyde (MMSA) into acetyl-CoA and propanoyl-CoA, respectively. Is involved in a myo-inositol catabolic pathway. Bicarbonate, and not CO2, is the end-product of the enzymatic reaction. In Geobacillus kaustophilus (strain HTA426), this protein is Malonate-semialdehyde dehydrogenase 2.